The sequence spans 110 residues: Small ribosomal subunit protein bS6 (110 aa).

The protein belongs to the bacterial ribosomal protein bS6 family.

Functionally, binds together with bS18 to 16S ribosomal RNA. This is Small ribosomal subunit protein bS6 (rpsF) from Aquifex aeolicus (strain VF5).